Consider the following 146-residue polypeptide: Hemoglobin subunit beta (146 aa).

An N-acetylvaline modification is found at Val-1. Residues 2 to 146 enclose the Globin domain; the sequence is HLSGEEKTAL…VANALAHKYH (145 aa). Ser-44 is subject to Phosphoserine. The residue at position 59 (Lys-59) is an N6-acetyllysine. His-63 is a heme b binding site. Residue Lys-82 is modified to N6-acetyllysine. His-92 serves as a coordination point for heme b. Cys-93 carries the post-translational modification S-nitrosocysteine. Lys-144 is modified (N6-acetyllysine).

Belongs to the globin family. As to quaternary structure, heterotetramer of two alpha chains and two beta chains. As to expression, red blood cells.

Involved in oxygen transport from the lung to the various peripheral tissues. In Tamiasciurus hudsonicus (American red squirrel), this protein is Hemoglobin subunit beta.